Here is a 329-residue protein sequence, read N- to C-terminus: Sideroflexin (329 aa).

The next 5 membrane-spanning stretches (helical) occupy residues 95-115 (AFLPINVIICAGLILPNASIG), 147-167 (ILEAYASAVGISCSLAVGLGW), 183-203 (LRMMVPFTAVTSAGIANVLIM), 238-258 (FSRAATSFPALLLPPIVMGLF), and 274-294 (LNLAVIAAIFNTSLPAAIALF).

Belongs to the sideroflexin family.

It is found in the mitochondrion membrane. Mitochondrial amino-acid transporter that mediates transport of serine into mitochondria. The protein is Sideroflexin of Dictyostelium discoideum (Social amoeba).